The following is a 245-amino-acid chain: Heat shock transcription factor (245 aa).

A DNA-binding region spans residues 17-115 (KSGFVNRLYR…LISLITRDKS (99 aa)). The interval 130 to 169 (SLQYLASCNYKQQKEINDLKDRIKTLETKYATLYEIISNA) is involved in trimerization.

Belongs to the HSF family. Homotrimer. Homotrimerization increases the affinity of HSF1 to DNA.

Its subcellular location is the nucleus. DNA-binding transcription factor that specifically binds heat shock promoter elements (HSE) and activates transcription. The polypeptide is Heat shock transcription factor (Enterocytozoon bieneusi (strain H348) (Microsporidian parasite)).